A 59-amino-acid polypeptide reads, in one-letter code: Cecropin-A (59 aa).

A signal peptide spans 1–23; sequence MNFNKLFVIVLLAALAFFGQAEA. Leu57 is subject to Leucine amide.

It belongs to the cecropin family.

It localises to the secreted. Cecropins have lytic and antibacterial activity against several Gram-positive and Gram-negative bacteria. The polypeptide is Cecropin-A (CECA) (Culex pipiens pipiens (Northern house mosquito)).